Here is a 133-residue protein sequence, read N- to C-terminus: Ribosome-binding factor A (133 aa).

It belongs to the RbfA family. In terms of assembly, monomer. Binds 30S ribosomal subunits, but not 50S ribosomal subunits or 70S ribosomes.

The protein localises to the cytoplasm. One of several proteins that assist in the late maturation steps of the functional core of the 30S ribosomal subunit. Associates with free 30S ribosomal subunits (but not with 30S subunits that are part of 70S ribosomes or polysomes). Required for efficient processing of 16S rRNA. May interact with the 5'-terminal helix region of 16S rRNA. The sequence is that of Ribosome-binding factor A from Chelativorans sp. (strain BNC1).